A 343-amino-acid polypeptide reads, in one-letter code: Phosphatidylglycerol--prolipoprotein diacylglyceryl transferase 1 (343 aa).

Helical transmembrane passes span 19-39 (VPLR…VWLG), 54-74 (ADIA…YHVI), 93-113 (IWEG…GAWI), and 119-139 (GVPM…AQAI). Residue arginine 141 coordinates a 1,2-diacyl-sn-glycero-3-phospho-(1'-sn-glycerol). 3 consecutive transmembrane segments (helical) span residues 176 to 196 (HPTF…VIWA), 202 to 224 (LGHG…WIEY), and 238 to 258 (LNNW…VLSA). The segment at 269–343 (EPGAETAAGD…TNGADSAKKG (75 aa)) is disordered. The span at 283 to 293 (ADKDVKGTKDA) shows a compositional bias: basic and acidic residues. The segment covering 314 to 324 (APEDTSGADEA) has biased composition (acidic residues).

This sequence belongs to the Lgt family.

The protein localises to the cell membrane. It catalyses the reaction L-cysteinyl-[prolipoprotein] + a 1,2-diacyl-sn-glycero-3-phospho-(1'-sn-glycerol) = an S-1,2-diacyl-sn-glyceryl-L-cysteinyl-[prolipoprotein] + sn-glycerol 1-phosphate + H(+). The protein operates within protein modification; lipoprotein biosynthesis (diacylglyceryl transfer). Its function is as follows. Catalyzes the transfer of the diacylglyceryl group from phosphatidylglycerol to the sulfhydryl group of the N-terminal cysteine of a prolipoprotein, the first step in the formation of mature lipoproteins. The chain is Phosphatidylglycerol--prolipoprotein diacylglyceryl transferase 1 from Streptomyces coelicolor (strain ATCC BAA-471 / A3(2) / M145).